Here is a 945-residue protein sequence, read N- to C-terminus: LPS-assembly protein LptD (945 aa).

The first 33 residues, 1–33 (MALKSPAFRKKFPLLVTGSLLALQPLATSFVVA), serve as a signal peptide directing secretion. The segment at 56-98 (AQLPPRPVHDANSVSSSVATAADATGEEASGDKSKLVTEAKGR) is disordered. The segment covering 65–79 (DANSVSSSVATAADA) has biased composition (low complexity). Residues 85 to 98 (SGDKSKLVTEAKGR) are compositionally biased toward basic and acidic residues.

The protein belongs to the LptD family. Component of the lipopolysaccharide transport and assembly complex. Interacts with LptE and LptA.

Its subcellular location is the cell outer membrane. In terms of biological role, together with LptE, is involved in the assembly of lipopolysaccharide (LPS) at the surface of the outer membrane. The polypeptide is LPS-assembly protein LptD (Pseudomonas fluorescens (strain ATCC BAA-477 / NRRL B-23932 / Pf-5)).